We begin with the raw amino-acid sequence, 197 residues long: DNA-directed RNA polymerases I, II, and III subunit rpabc1 (197 aa).

This sequence belongs to the archaeal Rpo5/eukaryotic RPB5 RNA polymerase subunit family. As to quaternary structure, component of the RNA polymerase I (Pol I), RNA polymerase II (Pol II) and RNA polymerase III (Pol III) complexes consisting of at least 13, 12 and 17 subunits, respectively. In RNA Pol II, this subunit is present in 2-fold molar excess over the other subunits.

The protein localises to the nucleus. DNA-dependent RNA polymerase catalyzes the transcription of DNA into RNA using the four ribonucleoside triphosphates as substrates. Common component of RNA polymerases I, II and III which synthesize ribosomal RNA precursors, mRNA precursors and many functional non-coding RNAs, and small RNAs, such as 5S rRNA and tRNAs, respectively. Pol II is the central component of the basal RNA polymerase II transcription machinery. Pols are composed of mobile elements that move relative to each other. In Pol II, RPB5 is part of the lower jaw surrounding the central large cleft and thought to grab the incoming DNA template. Seems to be the major component in this process. This chain is DNA-directed RNA polymerases I, II, and III subunit rpabc1 (polr2e), found in Dictyostelium discoideum (Social amoeba).